A 170-amino-acid chain; its full sequence is Large ribosomal subunit protein uL11 (170 aa).

This sequence belongs to the universal ribosomal protein uL11 family. Part of the ribosomal stalk of the 50S ribosomal subunit. Interacts with L10 and the large rRNA to form the base of the stalk. L10 forms an elongated spine to which L12 dimers bind in a sequential fashion forming a multimeric L10(L12)X complex.

Forms part of the ribosomal stalk which helps the ribosome interact with GTP-bound translation factors. The polypeptide is Large ribosomal subunit protein uL11 (Sulfolobus acidocaldarius (strain ATCC 33909 / DSM 639 / JCM 8929 / NBRC 15157 / NCIMB 11770)).